A 175-amino-acid polypeptide reads, in one-letter code: MLTSGVILLNGGLLSPNPGLIFWTTVSFVIVLLILRKLAWGPIISALEEREKGIQSSIDRAHKAKDEAEEILRKNRELLAKADAESDKIIREGKEYGEKLRAGIAEKAQAEAAKMISMAKEEIEQEKRRALDVLRNEVAELAVMGAEKIIKTSLDADMQKKIVDSMIQDLSTKRN.

Residues 14-34 (LSPNPGLIFWTTVSFVIVLLI) form a helical membrane-spanning segment.

It belongs to the ATPase B chain family. In terms of assembly, F-type ATPases have 2 components, F(1) - the catalytic core - and F(0) - the membrane proton channel. F(1) has five subunits: alpha(3), beta(3), gamma(1), delta(1), epsilon(1). F(0) has four main subunits: a(1), b(2) and c(10-14). The alpha and beta chains form an alternating ring which encloses part of the gamma chain. F(1) is attached to F(0) by a central stalk formed by the gamma and epsilon chains, while a peripheral stalk is formed by the delta and b chains.

The protein localises to the cell inner membrane. In terms of biological role, f(1)F(0) ATP synthase produces ATP from ADP in the presence of a proton or sodium gradient. F-type ATPases consist of two structural domains, F(1) containing the extramembraneous catalytic core and F(0) containing the membrane proton channel, linked together by a central stalk and a peripheral stalk. During catalysis, ATP synthesis in the catalytic domain of F(1) is coupled via a rotary mechanism of the central stalk subunits to proton translocation. Functionally, component of the F(0) channel, it forms part of the peripheral stalk, linking F(1) to F(0). This chain is ATP synthase subunit b, found in Chlorobium phaeobacteroides (strain DSM 266 / SMG 266 / 2430).